Reading from the N-terminus, the 427-residue chain is Dihydroorotase (427 aa).

The Zn(2+) site is built by H60 and H62. Substrate contacts are provided by residues 62-64 and N94; that span reads HLR. 3 residues coordinate Zn(2+): D151, H178, and H231. N277 is a binding site for substrate. D304 lines the Zn(2+) pocket. D304 is a catalytic residue. Substrate-binding positions include H308 and 322 to 323; that span reads FG.

The protein belongs to the metallo-dependent hydrolases superfamily. DHOase family. Class I DHOase subfamily. The cofactor is Zn(2+).

It carries out the reaction (S)-dihydroorotate + H2O = N-carbamoyl-L-aspartate + H(+). Its pathway is pyrimidine metabolism; UMP biosynthesis via de novo pathway; (S)-dihydroorotate from bicarbonate: step 3/3. Catalyzes the reversible cyclization of carbamoyl aspartate to dihydroorotate. The protein is Dihydroorotase of Pelotomaculum thermopropionicum (strain DSM 13744 / JCM 10971 / SI).